A 215-amino-acid polypeptide reads, in one-letter code: MKALLLGAPGAGKGTQAQFITAAFGIPQISTGDMLRAAIKAGTPLGLEAKKIIDEGGLVRDDIIIGMVKERIAQDDCKNGFLFDGFPRTLAQAEAMVEAGVGLDAVVEIDVSDSVIVDRMSGRRVHLASGRTYHVTYNPPKTEGKDDVTGEDLIQRDDDKEETVKKRLAVYHEQTEVLVDFYSKLEGEHAPKYIKVDGTQAVEAVKAEVLGALGK.

An ATP-binding site is contributed by 10–15; the sequence is GAGKGT. Residues 30 to 59 form an NMP region; it reads STGDMLRAAIKAGTPLGLEAKKIIDEGGLV. Residues Thr31, Arg36, 57-59, 85-88, and Gln92 contribute to the AMP site; these read GLV and GFPR. Positions 122–159 are LID; it reads GRRVHLASGRTYHVTYNPPKTEGKDDVTGEDLIQRDDD. ATP contacts are provided by residues Arg123 and 132–133; that span reads TY. Residues Arg156 and Arg167 each contribute to the AMP site. Residue Gln200 participates in ATP binding.

This sequence belongs to the adenylate kinase family. In terms of assembly, monomer.

It localises to the cytoplasm. It carries out the reaction AMP + ATP = 2 ADP. Its pathway is purine metabolism; AMP biosynthesis via salvage pathway; AMP from ADP: step 1/1. Catalyzes the reversible transfer of the terminal phosphate group between ATP and AMP. Plays an important role in cellular energy homeostasis and in adenine nucleotide metabolism. This is Adenylate kinase from Neisseria gonorrhoeae (strain ATCC 700825 / FA 1090).